Reading from the N-terminus, the 1360-residue chain is Transmembrane protein 94 (1360 aa).

The Cytoplasmic portion of the chain corresponds to 1–64; it reads MDLREKHLGE…FLHLSNRCSC (64 aa). The helical transmembrane segment at 65 to 85 threads the bilayer; that stretch reads FHWPGASLMLLAVLLLLCCCG. At 86-92 the chain is on the lumenal side; that stretch reads GQPAGSQ. The helical transmembrane segment at 93–113 threads the bilayer; that stretch reads GVELVNASALFLLLLLNLVLI. Over 114-273 the chain is Cytoplasmic; that stretch reads GRQDRLKRRE…RPVTALDNER (160 aa). A phosphoserine mark is found at serine 221 and serine 225. Residues 274-294 form a helical membrane-spanning segment; that stretch reads FTVQSVMLHYAVPVVLAGFLI. The Lumenal portion of the chain corresponds to 295–320; that stretch reads TNALRFMFKAPGVTSWQYTLLQLQVN. Residues 321-341 form a helical membrane-spanning segment; sequence GMLPILPLLFPVLWVLATACG. The Cytoplasmic portion of the chain corresponds to 342–1096; sequence EARVLAQMSK…RHATYGIRKC (755 aa). Residues 417–422 carry the DKQGIL motif; it reads DKQGIL. A phosphoserine mark is found at serine 444, serine 445, and serine 454. The segment at 487–545 is disordered; it reads EQERSDWLADGPKPSEPYPHHKGHGRSKHPSGSNVSFSRDTEGGEEEPSKAQPGTEGDP. Basic residues predominate over residues 506 to 515; that stretch reads HHKGHGRSKH. Serine 517, serine 522, serine 802, and serine 945 each carry phosphoserine. A helical transmembrane segment spans residues 1097–1117; that stretch reads FLFLLQCQLTLVVIQFLSCLV. Residues 1118 to 1124 lie on the Lumenal side of the membrane; the sequence is QLPPLLS. The helical transmembrane segment at 1125-1145 threads the bilayer; sequence TTDILWLSCFCYPLLSISLLG. Residues 1146 to 1171 are Cytoplasmic-facing; sequence KPPHSSIMSMATGKNLQSIPKKTQHY. The helical transmembrane segment at 1172-1192 threads the bilayer; that stretch reads FLLCFLLKFSLTISSCLVCFG. Topologically, residues 1193-1232 are lumenal; that stretch reads FTLQSFCDSARARNLTNCSSVMLCSNDDRAPAWFEDFANG. Residues asparagine 1206 and asparagine 1209 are each glycosylated (N-linked (GlcNAc...) asparagine). Residues 1233–1253 form a helical membrane-spanning segment; sequence LLSAQKLTAALIVLHTVFISI. Topologically, residues 1254 to 1269 are cytoplasmic; the sequence is THVHRTKPLWRKSPLT. Residues 1270–1290 traverse the membrane as a helical segment; the sequence is NLWWAVTVPVVLLGQVVQTVV. Residues 1291–1310 are Lumenal-facing; the sequence is DLQLWTHRDSRVHFGLEDVP. The chain crosses the membrane as a helical span at residues 1311 to 1331; it reads LLTWLLGCLSLVLVVVTNEIV. Residues 1332-1360 are Cytoplasmic-facing; sequence KLHEIRVRVRYQKRQKLQFETKLGMNSPF. A GMN; metal-binding motif motif is present at residues 1355-1357; it reads GMN.

As to quaternary structure, forms homooligomers.

The protein resides in the endoplasmic reticulum membrane. In terms of biological role, could function in the uptake of Mg(2+) from the cytosol into the endoplasmic reticulum and regulate intracellular Mg(2+) homeostasis. The sequence is that of Transmembrane protein 94 from Mus musculus (Mouse).